A 329-amino-acid chain; its full sequence is Probable aryl-alcohol dehydrogenase AAD4 (329 aa).

Tyrosine 30 (proton donor) is an active-site residue. Histidine 105 contributes to the substrate binding site. NADP(+) is bound at residue 190–200 (DVMGGGRFQSK).

The protein belongs to the aldo/keto reductase family. Aldo/keto reductase 2 subfamily.

This Saccharomyces cerevisiae (strain ATCC 204508 / S288c) (Baker's yeast) protein is Probable aryl-alcohol dehydrogenase AAD4 (AAD4).